A 918-amino-acid polypeptide reads, in one-letter code: Glutamate receptor ionotropic, kainate 1 (918 aa).

Residues 1-30 (MEHGTLLAQPGLWTRDTSWALLYFLCYILP) form the signal peptide. The Extracellular segment spans residues 31 to 576 (QTAPQVLRIG…VFSFLNPLSP (546 aa)). Asn-68, Asn-74, Asn-276, Asn-379, Asn-428, Asn-439, and Asn-446 each carry an N-linked (GlcNAc...) asparagine glycan. Residues Pro-531, Thr-533, and Arg-538 each contribute to the L-glutamate site. N-linked (GlcNAc...) asparagine glycosylation is present at Asn-561. A helical membrane pass occupies residues 577-597 (DIWMYVLLACLGVSCVLFVIA). The Cytoplasmic portion of the chain corresponds to 598 to 653 (RFTPYEWYNPHPCNPDSDVVENNFTLLNSFWFGVGALMQQGSELMPKALSTRIVGG). A helical membrane pass occupies residues 654-674 (IWWFFTLIIISSYTANLAAFL). Residues 675–834 (TVERMESPID…KEASALGVEN (160 aa)) lie on the Extracellular side of the membrane. Residues Ser-704 and Thr-705 each contribute to the L-glutamate site. The residue at position 725 (Ser-725) is a Phosphoserine; by PKC. Glu-753 is an L-glutamate binding site. Thr-761 is subject to Phosphothreonine; by PKC. Cys-765 and Cys-819 form a disulfide bridge. Residue Asn-766 is glycosylated (N-linked (GlcNAc...) asparagine). Residues 835–855 (IGGIFIVLAAGLVLSVFVAIG) form a helical membrane-spanning segment. Residues 856–918 (EFIYKSRKNN…IRKQSSVHTV (63 aa)) lie on the Cytoplasmic side of the membrane.

The protein belongs to the glutamate-gated ion channel (TC 1.A.10.1) family. GRIK1 subfamily. Homotetramer or heterotetramer of pore-forming glutamate receptor subunits. Tetramers may be formed by the dimerization of dimers. Can form functional heteromeric receptors with GRIK5. Can form functional heteromeric receptors with GRIK4. Interacts with KLHL17.

The protein localises to the cell membrane. Its subcellular location is the postsynaptic cell membrane. The catalysed reaction is Ca(2+)(in) = Ca(2+)(out). Ionotropic glutamate receptor that functions as a cation-permeable ligand-gated ion channel, gated by L-glutamate and the glutamatergic agonist kainic acid. L-glutamate acts as an excitatory neurotransmitter at many synapses in the central nervous system. Binding of the excitatory neurotransmitter L-glutamate induces a conformation change, leading to the opening of the cation channel, and thereby converts the chemical signal to an electrical impulse. The receptor then desensitizes rapidly and enters a transient inactive state, characterized by the presence of bound agonist. Functionally, ionotropic glutamate receptor that functions as a cation-permeable ligand-gated ion channel, gated by L-glutamate and the glutamatergic agonist kainic acid. In Homo sapiens (Human), this protein is Glutamate receptor ionotropic, kainate 1 (GRIK1).